The following is a 306-amino-acid chain: MRIEDIPHIPVLLNETIGLYNDMPENGYFIDCTLGFGGHSEAILEKYPNIKLIGIDQDAEAMHFAKNRLARFGDRVQFINKRASSALEELPEDLPVSGILADIGVSSYQLDNKERGFTFESEELDMRMDKTQDFSAKDVVNFYSKEDLERIIKNYGECRRFKKVVSAIISKRPIKSNRELADILGHIGLRDKKDLAKIFQAIRIEVNNELNELEKILKNAKKLAKNGTILGIITFHSLEDRIVKNTFKEWSKKCICPPEAIRCECGGNNQLGKILTKKPLVASKEEIKMNPRSRSAKLRGFQFIRG.

Residues 37–39 (GGH), D56, D102, and Q109 contribute to the S-adenosyl-L-methionine site.

Belongs to the methyltransferase superfamily. RsmH family.

The protein resides in the cytoplasm. The catalysed reaction is cytidine(1402) in 16S rRNA + S-adenosyl-L-methionine = N(4)-methylcytidine(1402) in 16S rRNA + S-adenosyl-L-homocysteine + H(+). In terms of biological role, specifically methylates the N4 position of cytidine in position 1402 (C1402) of 16S rRNA. In Nautilia profundicola (strain ATCC BAA-1463 / DSM 18972 / AmH), this protein is Ribosomal RNA small subunit methyltransferase H.